A 267-amino-acid polypeptide reads, in one-letter code: Glutamate 5-kinase (267 aa).

Position 17 (Lys17) interacts with ATP. Substrate-binding residues include Ser57, Asp144, and Asn156. ATP contacts are provided by residues Ser176–Asp177 and Thr218–Lys224.

It belongs to the glutamate 5-kinase family.

It is found in the cytoplasm. It carries out the reaction L-glutamate + ATP = L-glutamyl 5-phosphate + ADP. It participates in amino-acid biosynthesis; L-proline biosynthesis; L-glutamate 5-semialdehyde from L-glutamate: step 1/2. Catalyzes the transfer of a phosphate group to glutamate to form L-glutamate 5-phosphate. The sequence is that of Glutamate 5-kinase from Clostridium acetobutylicum (strain ATCC 824 / DSM 792 / JCM 1419 / IAM 19013 / LMG 5710 / NBRC 13948 / NRRL B-527 / VKM B-1787 / 2291 / W).